Reading from the N-terminus, the 416-residue chain is Venom allergen 5 (416 aa).

The first 24 residues, 1–24, serve as a signal peptide directing secretion; the sequence is MKGILLLFLKLVVLFVYLCSSVLS. The region spanning 57–217 is the SCP domain; that stretch reads DDRNTIINLH…NYGPAGNLDD (161 aa). R82 carries the post-translational modification Arginine amide; in Cryptide Pep-4.

It belongs to the CRISP family. Venom allergen 5-like subfamily. In terms of processing, contains 9 disulfide bonds. As to expression, expressed by the venom gland.

The protein resides in the secreted. Presents weak lactate dehydrogenase (LDH) release from mast cells. Does not induce hemolytic activity, mast cell degranulation, and antimicrobial effects. In vivo, injection into mice causes moderate edema formation, but induces very weak or no change in nociceptive sensibility. It also causes an alteration in rearing (standing on hind limbs), but does not impact locomotion. The sequence is that of Venom allergen 5 from Tityus serrulatus (Brazilian scorpion).